We begin with the raw amino-acid sequence, 1463 residues long: DNA polymerase III PolC-type (1463 aa).

Residues tyrosine 425 to leucine 581 form the Exonuclease domain.

The protein belongs to the DNA polymerase type-C family. PolC subfamily.

The protein resides in the cytoplasm. It carries out the reaction DNA(n) + a 2'-deoxyribonucleoside 5'-triphosphate = DNA(n+1) + diphosphate. Required for replicative DNA synthesis. This DNA polymerase also exhibits 3' to 5' exonuclease activity. This is DNA polymerase III PolC-type from Streptococcus suis (strain 98HAH33).